The primary structure comprises 305 residues: tRNA dimethylallyltransferase (305 aa).

Residue 9–16 (GPTAVGKT) participates in ATP binding. A substrate-binding site is contributed by 11-16 (TAVGKT). The interaction with substrate tRNA stretch occupies residues 34 to 37 (DSRQ).

This sequence belongs to the IPP transferase family. As to quaternary structure, monomer. It depends on Mg(2+) as a cofactor.

It catalyses the reaction adenosine(37) in tRNA + dimethylallyl diphosphate = N(6)-dimethylallyladenosine(37) in tRNA + diphosphate. In terms of biological role, catalyzes the transfer of a dimethylallyl group onto the adenine at position 37 in tRNAs that read codons beginning with uridine, leading to the formation of N6-(dimethylallyl)adenosine (i(6)A). In Roseiflexus sp. (strain RS-1), this protein is tRNA dimethylallyltransferase.